The sequence spans 650 residues: Chaperone protein DnaK (650 aa).

Threonine 200 bears the Phosphothreonine; by autocatalysis mark. The span at 612-632 (GEGATAGAAAGAGAAGGQQAQ) shows a compositional bias: low complexity. A disordered region spans residues 612–650 (GEGATAGAAAGAGAAGGQQAQPQDDNVVDAEFKEVNDKK). Basic and acidic residues predominate over residues 641–650 (AEFKEVNDKK).

This sequence belongs to the heat shock protein 70 family.

In terms of biological role, acts as a chaperone. The sequence is that of Chaperone protein DnaK from Cupriavidus necator (strain ATCC 17699 / DSM 428 / KCTC 22496 / NCIMB 10442 / H16 / Stanier 337) (Ralstonia eutropha).